We begin with the raw amino-acid sequence, 268 residues long: Hydroxyethylthiazole kinase (268 aa).

M45 provides a ligand contact to substrate. Residues R121 and T167 each contribute to the ATP site. G194 is a substrate binding site.

This sequence belongs to the Thz kinase family. Mg(2+) is required as a cofactor.

It catalyses the reaction 5-(2-hydroxyethyl)-4-methylthiazole + ATP = 4-methyl-5-(2-phosphooxyethyl)-thiazole + ADP + H(+). The protein operates within cofactor biosynthesis; thiamine diphosphate biosynthesis; 4-methyl-5-(2-phosphoethyl)-thiazole from 5-(2-hydroxyethyl)-4-methylthiazole: step 1/1. Catalyzes the phosphorylation of the hydroxyl group of 4-methyl-5-beta-hydroxyethylthiazole (THZ). The polypeptide is Hydroxyethylthiazole kinase (Bacillus cereus (strain ZK / E33L)).